The chain runs to 292 residues: Polyamine aminopropyltransferase 1 (292 aa).

The PABS domain maps to 1 to 244; it reads MELGMFRLNI…YVNSFVFASD (244 aa). S-methyl-5'-thioadenosine is bound at residue Q35. Positions 66 and 90 each coordinate spermidine. S-methyl-5'-thioadenosine-binding positions include D110 and 142–143; that span reads DG. Residue D163 is the Proton acceptor of the active site.

The protein belongs to the spermidine/spermine synthase family. In terms of assembly, homodimer or homotetramer.

Its subcellular location is the cytoplasm. The enzyme catalyses norspermine + S-adenosyl 3-(methylsulfanyl)propylamine = caldopentamine + S-methyl-5'-thioadenosine + 2 H(+). It carries out the reaction norspermidine + S-adenosyl 3-(methylsulfanyl)propylamine = norspermine + S-methyl-5'-thioadenosine + H(+). The catalysed reaction is S-adenosyl 3-(methylsulfanyl)propylamine + spermidine = thermospermine + S-methyl-5'-thioadenosine + H(+). In terms of biological role, involved in the biosynthesis of polyamines which are thought to support the growth of thermophilic microorganisms under high-temperature conditions. It seems that long-chain and branched-chain of polyamines effectively stabilize DNA and RNA, respectively. Catalyzes the irreversible transfer of a propylamine group from the amino donor S-adenosylmethioninamine (decarboxy-AdoMet) to norspermidine, spermidine and norspermine to yield norspermine, thermospermine and caldopentamine, respectively. It can also synthesize sym-norspermidine (bis(3-aminopropyl)amine) from 1,3-diaminopropane with a very low activity. The biosynthesis of caldohexamine and caldoheptamine from caldopentamine has been also observed. This is Polyamine aminopropyltransferase 1 from Hyperthermus butylicus (strain DSM 5456 / JCM 9403 / PLM1-5).